A 477-amino-acid polypeptide reads, in one-letter code: Bifunctional protein HldE (477 aa).

Residues 1-318 (MKVNLPAFER…ENAVRGRADT (318 aa)) are ribokinase. 195–198 (NLSE) is an ATP binding site. Asp264 is an active-site residue. A cytidylyltransferase region spans residues 344 to 477 (MTNGVFDILH…IKKIQTESEK (134 aa)).

The protein in the N-terminal section; belongs to the carbohydrate kinase PfkB family. In the C-terminal section; belongs to the cytidylyltransferase family. In terms of assembly, homodimer.

It catalyses the reaction D-glycero-beta-D-manno-heptose 7-phosphate + ATP = D-glycero-beta-D-manno-heptose 1,7-bisphosphate + ADP + H(+). The enzyme catalyses D-glycero-beta-D-manno-heptose 1-phosphate + ATP + H(+) = ADP-D-glycero-beta-D-manno-heptose + diphosphate. It functions in the pathway nucleotide-sugar biosynthesis; ADP-L-glycero-beta-D-manno-heptose biosynthesis; ADP-L-glycero-beta-D-manno-heptose from D-glycero-beta-D-manno-heptose 7-phosphate: step 1/4. It participates in nucleotide-sugar biosynthesis; ADP-L-glycero-beta-D-manno-heptose biosynthesis; ADP-L-glycero-beta-D-manno-heptose from D-glycero-beta-D-manno-heptose 7-phosphate: step 3/4. In terms of biological role, catalyzes the phosphorylation of D-glycero-D-manno-heptose 7-phosphate at the C-1 position to selectively form D-glycero-beta-D-manno-heptose-1,7-bisphosphate. Its function is as follows. Catalyzes the ADP transfer from ATP to D-glycero-beta-D-manno-heptose 1-phosphate, yielding ADP-D-glycero-beta-D-manno-heptose. This Salmonella agona (strain SL483) protein is Bifunctional protein HldE.